Reading from the N-terminus, the 96-residue chain is Large ribosomal subunit protein uL23 (96 aa).

Belongs to the universal ribosomal protein uL23 family. In terms of assembly, part of the 50S ribosomal subunit. Contacts protein L29, and trigger factor when it is bound to the ribosome.

Its function is as follows. One of the early assembly proteins it binds 23S rRNA. One of the proteins that surrounds the polypeptide exit tunnel on the outside of the ribosome. Forms the main docking site for trigger factor binding to the ribosome. The protein is Large ribosomal subunit protein uL23 of Alkaliphilus metalliredigens (strain QYMF).